Here is a 41-residue protein sequence, read N- to C-terminus: Large ribosomal subunit protein bL36B (41 aa).

This sequence belongs to the bacterial ribosomal protein bL36 family.

The sequence is that of Large ribosomal subunit protein bL36B from Actinobacillus pleuropneumoniae serotype 5b (strain L20).